The following is a 718-amino-acid chain: Ribosomal RNA large subunit methyltransferase K/L (718 aa).

One can recognise a THUMP domain in the interval 43 to 154 (TQYRILLWSR…QDELVVSLDL (112 aa)).

This sequence belongs to the methyltransferase superfamily. RlmKL family.

Its subcellular location is the cytoplasm. The enzyme catalyses guanosine(2445) in 23S rRNA + S-adenosyl-L-methionine = N(2)-methylguanosine(2445) in 23S rRNA + S-adenosyl-L-homocysteine + H(+). It carries out the reaction guanosine(2069) in 23S rRNA + S-adenosyl-L-methionine = N(2)-methylguanosine(2069) in 23S rRNA + S-adenosyl-L-homocysteine + H(+). Specifically methylates the guanine in position 2445 (m2G2445) and the guanine in position 2069 (m7G2069) of 23S rRNA. The protein is Ribosomal RNA large subunit methyltransferase K/L of Histophilus somni (strain 2336) (Haemophilus somnus).